Consider the following 595-residue polypeptide: Apolipoprotein N-acyltransferase 2 (595 aa).

Helical transmembrane passes span 30-50 (FLAF…FGFF), 63-83 (LFFH…HWII), 95-115 (VVAI…FPIF), 167-187 (AEIT…YTLF), and 210-230 (FITL…FLFK). In terms of domain architecture, CN hydrolase spans 241–555 (LNVLIVQPDA…AEALSETIDV (315 aa)). E293 functions as the Proton acceptor in the catalytic mechanism. K372 is an active-site residue. C463 acts as the Nucleophile in catalysis. The helical transmembrane segment at 569 to 589 (LIPWLMLFLTGIYYLNLLIGI) threads the bilayer.

Belongs to the CN hydrolase family. Apolipoprotein N-acyltransferase subfamily.

The protein resides in the cell inner membrane. It catalyses the reaction N-terminal S-1,2-diacyl-sn-glyceryl-L-cysteinyl-[lipoprotein] + a glycerophospholipid = N-acyl-S-1,2-diacyl-sn-glyceryl-L-cysteinyl-[lipoprotein] + a 2-acyl-sn-glycero-3-phospholipid + H(+). Its pathway is protein modification; lipoprotein biosynthesis (N-acyl transfer). Functionally, catalyzes the phospholipid dependent N-acylation of the N-terminal cysteine of apolipoprotein, the last step in lipoprotein maturation. In Leptospira interrogans serogroup Icterohaemorrhagiae serovar Lai (strain 56601), this protein is Apolipoprotein N-acyltransferase 2.